The chain runs to 259 residues: Ubiquinol-cytochrome c reductase complex assembly factor 1 (259 aa).

The protein belongs to the CBP3 family. As to quaternary structure, interacts with sloth1; the interaction is probably involved in the assembly and stability of the mitochondrial ubiquinol-cytochrome c reductase complex.

The protein resides in the mitochondrion inner membrane. In terms of biological role, required for the assembly of the ubiquinol-cytochrome c reductase complex (mitochondrial respiratory chain complex III or cytochrome b-c1 complex). May be involved in cytochrome b translation and/or stability. The sequence is that of Ubiquinol-cytochrome c reductase complex assembly factor 1 from Drosophila melanogaster (Fruit fly).